We begin with the raw amino-acid sequence, 311 residues long: Malate dehydrogenase (311 aa).

NAD(+) is bound by residues 7-12 and D32; that span reads GAGNVG. 2 residues coordinate substrate: R82 and R88. Residues N95 and 118–120 contribute to the NAD(+) site; that span reads VSN. Positions 120 and 151 each coordinate substrate. The active-site Proton acceptor is H175.

This sequence belongs to the LDH/MDH superfamily. MDH type 3 family.

The enzyme catalyses (S)-malate + NAD(+) = oxaloacetate + NADH + H(+). In terms of biological role, catalyzes the reversible oxidation of malate to oxaloacetate. The chain is Malate dehydrogenase from Flavobacterium johnsoniae (strain ATCC 17061 / DSM 2064 / JCM 8514 / BCRC 14874 / CCUG 350202 / NBRC 14942 / NCIMB 11054 / UW101) (Cytophaga johnsonae).